Consider the following 276-residue polypeptide: Probable ABC transporter permease protein PH1036 (276 aa).

6 helical membrane-spanning segments follow: residues 12–32 (IAWSIGIAWLIPFMGVLMASV), 75–95 (IVAIPSTIVPVIVASLAAYAF), 109–129 (FIVLLMALPQQMTVVPLYFLL), 137–157 (TFRGLIIVHSAWGLAWIIFFM), 186–206 (IVLPMALPGLISASILQFTWV), and 241–261 (GLLTAASIMVMLVPLLVYALF). An ABC transmembrane type-1 domain is found at 70 to 261 (LKNSLIVAIP…LVPLLVYALF (192 aa)).

This sequence belongs to the binding-protein-dependent transport system permease family. MalFG subfamily.

Its subcellular location is the cell membrane. Its function is as follows. Probably part of a binding-protein-dependent transport system PH1036/38/39. Probably responsible for the translocation of the substrate across the membrane. The chain is Probable ABC transporter permease protein PH1036 from Pyrococcus horikoshii (strain ATCC 700860 / DSM 12428 / JCM 9974 / NBRC 100139 / OT-3).